Reading from the N-terminus, the 4004-residue chain is Hybrid PKS-NRPS synthetase mpsA (4004 aa).

In terms of domain architecture, Ketosynthase family 3 (KS3) spans Asn-5–Ser-438. Catalysis depends on for beta-ketoacyl synthase activity residues Cys-178, His-317, and His-358. In terms of domain architecture, Malonyl-CoA:ACP transacylase (MAT) spans Val-544–Ser-867. Residues His-933–Pro-1066 form an N-terminal hotdog fold region. The dehydratase (DH) domain stretch occupies residues His-933–Ala-1233. The PKS/mFAS DH domain maps to His-933 to Glu-1234. His-966 (proton acceptor; for dehydratase activity) is an active-site residue. The C-terminal hotdog fold stretch occupies residues Met-1081–Glu-1234. The Proton donor; for dehydratase activity role is filled by Asp-1141. The methyltransferase (MT) domain stretch occupies residues Glu-1289 to Leu-1575. One can recognise a Ketoreductase (KR) domain in the interval Thr-2102–Gly-2272. The 79-residue stretch at Glu-2384 to Leu-2462 folds into the Carrier 1 domain. Ser-2422 is modified (O-(pantetheine 4'-phosphoryl)serine). Residues Gly-2471 to Lys-2540 form a disordered region. A compositionally biased stretch (low complexity) spans Pro-2488 to Val-2500. A compositionally biased stretch (basic and acidic residues) spans Leu-2514 to Lys-2540. The segment at Pro-2584–Glu-3019 is condensation (C) domain. Residues Lys-3060–Lys-3459 are adenylation (A) (KR) domain. The region spanning Ala-3570–Thr-3647 is the Carrier 2 domain. At Ser-3607 the chain carries O-(pantetheine 4'-phosphoryl)serine. The segment at Leu-3694 to Phe-3924 is reductase (RED) domain.

This sequence in the C-terminal section; belongs to the NRP synthetase family. Pantetheine 4'-phosphate serves as cofactor.

It functions in the pathway secondary metabolite biosynthesis. Hybrid PKS-NRPS synthetase; part of the gene cluster that mediates the biosynthesis of macrophasetins, 3-decalinoyltetramic acids (DTAs) which feature a tetramate (pyrrolidine-2,4-dione) unit connected to a decalin fragment and that have potent bioactivities. The PKS-NRPS mpsA together with its associated enoylreductase partner mpsG incorporate one unit of acetyl-CoA, seven units of malonyl-CoA, and one unit of L-alanine to assemble the linear tetramic acid intermediate corresponding to the backbone of macrophasetins. Without the Diels-Alderase mpsD, the mpsA/G product can undergo the non-enzymatic intramolecular Diels-Alder (IMDA) reaction to generate both macrophasetin A and macrophasetin B. Catalyzed by mpsD, the linear tetramic acid intermediate is thoroughly converted to macrophasetin A via the endo-IMDA reaction in a regioselective and stereoselective manner. Finally, the cytochrome P450 monooxygenase mpsF catalyzes the hydroxylation at C20 to yield the end product macrophasetin C. This is Hybrid PKS-NRPS synthetase mpsA from Macrophomina phaseolina (strain MS6) (Charcoal rot fungus).